The following is a 353-amino-acid chain: Putative protein SPATA31J1 (353 aa).

Residues 34 to 54 (IPQIIHFVLFVVFSLVILIIL) traverse the membrane as a helical segment. The disordered stretch occupies residues 122–271 (EGSSHHLPRQ…NPGWVSWSDS (150 aa)). A compositionally biased stretch (low complexity) spans 182–195 (SVESLGSPSSLSSS). Positions 211 to 221 (PPASTLSPNPT) are enriched in polar residues. Residues 222-237 (SSTESLGYLSSLSSSQ) are compositionally biased toward low complexity. The span at 244–262 (PLKHPSHKPRGRSLPRRRN) shows a compositional bias: basic residues.

Belongs to the SPATA31 family.

It localises to the membrane. In Homo sapiens (Human), this protein is Putative protein SPATA31J1.